We begin with the raw amino-acid sequence, 100 residues long: Small ribosomal subunit protein uS14 (100 aa).

It belongs to the universal ribosomal protein uS14 family. In terms of assembly, part of the 30S ribosomal subunit. Contacts proteins S3 and S10.

Its function is as follows. Binds 16S rRNA, required for the assembly of 30S particles and may also be responsible for determining the conformation of the 16S rRNA at the A site. The protein is Small ribosomal subunit protein uS14 of Synechococcus sp. (strain RCC307).